We begin with the raw amino-acid sequence, 566 residues long: CTP synthase (566 aa).

The interval 1–265 is amidoligase domain; the sequence is MTKYVFVTGG…DEIVCHKLNL (265 aa). Ser13 serves as a coordination point for CTP. Residue Ser13 coordinates UTP. Residues 14 to 19 and Asp71 contribute to the ATP site; that span reads SLGKGI. The Mg(2+) site is built by Asp71 and Glu139. Residues 146-148, 186-191, and Lys222 each bind CTP; these read DIE and KTKPTQ. UTP-binding positions include 186–191 and Lys222; that span reads KTKPTQ. The Glutamine amidotransferase type-1 domain maps to 290–543; that stretch reads EIALVGKYVD…IEAAAVFADK (254 aa). Residue Gly351 participates in L-glutamine binding. Cys378 (nucleophile; for glutamine hydrolysis) is an active-site residue. L-glutamine contacts are provided by residues 379–382, Glu402, and Arg469; that span reads LGMQ. Active-site residues include His516 and Glu518. Residues 545 to 566 are disordered; it reads PSSEGAISADKPERTTTGAYIQ.

It belongs to the CTP synthase family. As to quaternary structure, homotetramer.

The enzyme catalyses UTP + L-glutamine + ATP + H2O = CTP + L-glutamate + ADP + phosphate + 2 H(+). It catalyses the reaction L-glutamine + H2O = L-glutamate + NH4(+). The catalysed reaction is UTP + NH4(+) + ATP = CTP + ADP + phosphate + 2 H(+). It functions in the pathway pyrimidine metabolism; CTP biosynthesis via de novo pathway; CTP from UDP: step 2/2. Its activity is regulated as follows. Allosterically activated by GTP, when glutamine is the substrate; GTP has no effect on the reaction when ammonia is the substrate. The allosteric effector GTP functions by stabilizing the protein conformation that binds the tetrahedral intermediate(s) formed during glutamine hydrolysis. Inhibited by the product CTP, via allosteric rather than competitive inhibition. Catalyzes the ATP-dependent amination of UTP to CTP with either L-glutamine or ammonia as the source of nitrogen. Regulates intracellular CTP levels through interactions with the four ribonucleotide triphosphates. The sequence is that of CTP synthase from Nitrosospira multiformis (strain ATCC 25196 / NCIMB 11849 / C 71).